The chain runs to 62 residues: Photosystem II reaction center protein Z (62 aa).

2 consecutive transmembrane segments (helical) span residues Ala-8–Ala-28 and Phe-41–Ile-61.

This sequence belongs to the PsbZ family. PSII is composed of 1 copy each of membrane proteins PsbA, PsbB, PsbC, PsbD, PsbE, PsbF, PsbH, PsbI, PsbJ, PsbK, PsbL, PsbM, PsbT, PsbY, PsbZ, Psb30/Ycf12, at least 3 peripheral proteins of the oxygen-evolving complex and a large number of cofactors. It forms dimeric complexes.

It is found in the plastid. The protein resides in the chloroplast thylakoid membrane. In terms of biological role, may control the interaction of photosystem II (PSII) cores with the light-harvesting antenna, regulates electron flow through the 2 photosystem reaction centers. PSII is a light-driven water plastoquinone oxidoreductase, using light energy to abstract electrons from H(2)O, generating a proton gradient subsequently used for ATP formation. The polypeptide is Photosystem II reaction center protein Z (Phalaenopsis aphrodite subsp. formosana (Moth orchid)).